Reading from the N-terminus, the 429-residue chain is MEIVCEDFQKVLTKIKLLRENANIIEETVQRSVREIVQNVRESRDEALFFYTKKFDGVEIKDVRVSEEEIKQASMFVESSFLEALQEAKKNIISYHEKQKRQSMFDCTSKGIIRGQIIRPLENIGVYVPGGTASYPSSVLMNVLPAKLAGVKKIVMVTPPRAGGIDPHILVAASLAGVDEIYMIGGAQAIAALAYGTESIPKVDKIVGPGNLYVALAKREVYGIVNIDMIAGPSEIVVIADETGNAKYIAADLLSQAEHDERATAICITTNIELAKEVEKEIERQLETLPRSEIARESINRNGAIFIVPSIDEALQLSNEIAPEHLELHIKEPMNALAYVKHAGSIFLGPYAPEPLGDYLAGPNHVLPTSGTARFFSPLSVDDFVKKSSFLSYTEEALRDVKHHIVELANKEGLHAHAKAIQIRFGEEE.

NAD(+) is bound by residues tyrosine 127, glutamine 188, and asparagine 211. Substrate contacts are provided by serine 234, glutamine 256, and histidine 259. The Zn(2+) site is built by glutamine 256 and histidine 259. Active-site proton acceptor residues include glutamate 324 and histidine 325. The substrate site is built by histidine 325, aspartate 358, glutamate 412, and histidine 417. Aspartate 358 is a binding site for Zn(2+). Histidine 417 is a Zn(2+) binding site.

It belongs to the histidinol dehydrogenase family. Requires Zn(2+) as cofactor.

The catalysed reaction is L-histidinol + 2 NAD(+) + H2O = L-histidine + 2 NADH + 3 H(+). It participates in amino-acid biosynthesis; L-histidine biosynthesis; L-histidine from 5-phospho-alpha-D-ribose 1-diphosphate: step 9/9. In terms of biological role, catalyzes the sequential NAD-dependent oxidations of L-histidinol to L-histidinaldehyde and then to L-histidine. The polypeptide is Histidinol dehydrogenase (Bacillus thuringiensis subsp. konkukian (strain 97-27)).